Here is a 1164-residue protein sequence, read N- to C-terminus: DNA-directed RNA polymerase 132 kDa polypeptide (1164 aa).

The protein belongs to the RNA polymerase beta chain family. The DNA-dependent RNA polymerase used for intermediate and late genes expression consists of eight subunits (147) kDa, (133) kDa, (35) kDa, (30) kDa, (22) kDa, (19) kDa, (18) kDa and (7) kDa totalling more than 500 kDa in mass. The same holoenzyme, with the addition of the transcription-specificity factor RAP94, is used for early gene expression.

The protein localises to the virion. The catalysed reaction is RNA(n) + a ribonucleoside 5'-triphosphate = RNA(n+1) + diphosphate. Functionally, part of the DNA-dependent RNA polymerase which catalyzes the transcription of viral DNA into RNA using the four ribonucleoside triphosphates as substrates. Responsible for the transcription of early, intermediate and late genes. DNA-dependent RNA polymerase associates with the early transcription factor (ETF), itself composed of D6 and A7, thereby allowing the early genes transcription. Late transcription, and probably also intermediate transcription, require newly synthesized RNA polymerase. The polypeptide is DNA-directed RNA polymerase 132 kDa polypeptide (RPO132) (Mus musculus (Mouse)).